The primary structure comprises 259 residues: ATP synthase subunit a (259 aa).

The next 5 membrane-spanning stretches (helical) occupy residues 29–49, 90–110, 134–154, 208–228, and 230–250; these read TVNI…IWIF, IAPL…MDLI, DVNI…IYSI, LVFI…LSVP, and ALFH…LTIV.

It belongs to the ATPase A chain family. As to quaternary structure, F-type ATPases have 2 components, CF(1) - the catalytic core - and CF(0) - the membrane proton channel. CF(1) has five subunits: alpha(3), beta(3), gamma(1), delta(1), epsilon(1). CF(0) has three main subunits: a(1), b(2) and c(9-12). The alpha and beta chains form an alternating ring which encloses part of the gamma chain. CF(1) is attached to CF(0) by a central stalk formed by the gamma and epsilon chains, while a peripheral stalk is formed by the delta and b chains.

It is found in the cell inner membrane. Its function is as follows. Key component of the proton channel; it plays a direct role in the translocation of protons across the membrane. In Aeromonas salmonicida (strain A449), this protein is ATP synthase subunit a.